The chain runs to 90 residues: Large ribosomal subunit protein bL27 (90 aa).

The interval 1–21 (MAHKKAGGSSRNGRDSQAKRL) is disordered.

It belongs to the bacterial ribosomal protein bL27 family.

The protein is Large ribosomal subunit protein bL27 of Laribacter hongkongensis (strain HLHK9).